A 136-amino-acid chain; its full sequence is Large ribosomal subunit protein uL16 (136 aa).

The protein belongs to the universal ribosomal protein uL16 family. As to quaternary structure, part of the 50S ribosomal subunit.

In terms of biological role, binds 23S rRNA and is also seen to make contacts with the A and possibly P site tRNAs. This is Large ribosomal subunit protein uL16 from Shewanella denitrificans (strain OS217 / ATCC BAA-1090 / DSM 15013).